The chain runs to 446 residues: MSELATQKAGEGTVSRLLNVVESELQAGREKGDPTEKQLQIILEDAPLWQRFKEVTNEMIVTKNGRRMFPVLKISVTGLDPNAMYSLLLDFVRTDSHRWKYVNGEWVPAGKPEVSSHSCVYIHPDSPNFGAHWMKAPISFSKVKLTNKLNGGGQIMLNSLHKYEPQVHIVRVGGAHRMVMNCSFPETQFIAVTAYQNEEITALKIKYNPFAKAFLDAKERNHLKDVPEAISESQHVTYSHLGGWILSNPDGVCTAANSNYQYATPLPLPAPHTHHGCEHYAGLRGHRQAPYPSAYMHRNHSPSVNLIESSSNNLQVFSGPDSWTSLSSTPHASILSVPHSNGPINPGPSPYPCLWTISNGGGGPVASGSEVHASTSGTILLGNPAVTSPSSLLPTQATTSAGVEVLGEPSLTSIAVSTWTAVASHPLPGWGGPGGAGRHSSSSLDS.

Positions 43-216 form a DNA-binding region, T-box; that stretch reads LEDAPLWQRF…YNPFAKAFLD (174 aa).

Its subcellular location is the nucleus. Functionally, transcriptional regulator involved in developmental processes. Can activate POMC gene expression and repress the alpha glycoprotein subunit and thyroid-stimulating hormone beta promoters. This is T-box transcription factor TBX19 from Mus musculus (Mouse).